Reading from the N-terminus, the 364-residue chain is Histidinol-phosphate aminotransferase (364 aa).

At Lys-222 the chain carries N6-(pyridoxal phosphate)lysine.

This sequence belongs to the class-II pyridoxal-phosphate-dependent aminotransferase family. Histidinol-phosphate aminotransferase subfamily. As to quaternary structure, homodimer. Pyridoxal 5'-phosphate serves as cofactor.

It catalyses the reaction L-histidinol phosphate + 2-oxoglutarate = 3-(imidazol-4-yl)-2-oxopropyl phosphate + L-glutamate. It functions in the pathway amino-acid biosynthesis; L-histidine biosynthesis; L-histidine from 5-phospho-alpha-D-ribose 1-diphosphate: step 7/9. The polypeptide is Histidinol-phosphate aminotransferase (Brevibacillus brevis (strain 47 / JCM 6285 / NBRC 100599)).